We begin with the raw amino-acid sequence, 115 residues long: Evasin P1183 (115 aa).

A signal peptide spans 1 to 25 (MTRNWSFRVIFVSAMWCALLKFATL). 4 cysteine pairs are disulfide-bonded: Cys-38-Cys-58, Cys-54-Cys-94, Cys-70-Cys-99, and Cys-89-Cys-108. Residues Asn-45, Asn-72, and Asn-103 are each glycosylated (N-linked (GlcNAc...) asparagine).

The protein localises to the secreted. Functionally, salivary chemokine-binding protein which binds to host chemokine CCL2. This is Evasin P1183 from Amblyomma triste (Neotropical tick).